We begin with the raw amino-acid sequence, 331 residues long: UPF0324 membrane protein SA0329 (331 aa).

11 helical membrane passes run Phe-9–Ala-26, Ile-31–Tyr-48, Leu-69–Gly-88, Leu-93–Leu-115, Ala-122–Phe-144, Ser-154–Phe-176, Tyr-183–Gly-202, Leu-217–Met-234, Ile-247–Pro-269, Leu-273–Val-295, and Leu-308–Tyr-330.

The protein belongs to the UPF0324 family.

The protein resides in the cell membrane. In Staphylococcus aureus (strain N315), this protein is UPF0324 membrane protein SA0329.